A 159-amino-acid chain; its full sequence is 2-C-methyl-D-erythritol 2,4-cyclodiphosphate synthase (159 aa).

Residues D10 and H12 each coordinate a divalent metal cation. 4-CDP-2-C-methyl-D-erythritol 2-phosphate contacts are provided by residues 10–12 and 36–37; these read DVH and HS. H44 serves as a coordination point for a divalent metal cation. Residues 58 to 60, 63 to 67, 102 to 108, 134 to 137, F141, 141 to 144, and R144 each bind 4-CDP-2-C-methyl-D-erythritol 2-phosphate; these read DIG, FPDTD, AQAPKMA, TTTE, and FTGR.

It belongs to the IspF family. In terms of assembly, homotrimer. It depends on a divalent metal cation as a cofactor.

The enzyme catalyses 4-CDP-2-C-methyl-D-erythritol 2-phosphate = 2-C-methyl-D-erythritol 2,4-cyclic diphosphate + CMP. It participates in isoprenoid biosynthesis; isopentenyl diphosphate biosynthesis via DXP pathway; isopentenyl diphosphate from 1-deoxy-D-xylulose 5-phosphate: step 4/6. Its function is as follows. Involved in the biosynthesis of isopentenyl diphosphate (IPP) and dimethylallyl diphosphate (DMAPP), two major building blocks of isoprenoid compounds. Catalyzes the conversion of 4-diphosphocytidyl-2-C-methyl-D-erythritol 2-phosphate (CDP-ME2P) to 2-C-methyl-D-erythritol 2,4-cyclodiphosphate (ME-CPP) with a corresponding release of cytidine 5-monophosphate (CMP). This chain is 2-C-methyl-D-erythritol 2,4-cyclodiphosphate synthase, found in Shewanella oneidensis (strain ATCC 700550 / JCM 31522 / CIP 106686 / LMG 19005 / NCIMB 14063 / MR-1).